A 289-amino-acid chain; its full sequence is ATP phosphoribosyltransferase (289 aa).

Belongs to the ATP phosphoribosyltransferase family. Long subfamily. It depends on Mg(2+) as a cofactor.

Its subcellular location is the cytoplasm. It catalyses the reaction 1-(5-phospho-beta-D-ribosyl)-ATP + diphosphate = 5-phospho-alpha-D-ribose 1-diphosphate + ATP. It participates in amino-acid biosynthesis; L-histidine biosynthesis; L-histidine from 5-phospho-alpha-D-ribose 1-diphosphate: step 1/9. Its activity is regulated as follows. Feedback inhibited by histidine. Its function is as follows. Catalyzes the condensation of ATP and 5-phosphoribose 1-diphosphate to form N'-(5'-phosphoribosyl)-ATP (PR-ATP). Has a crucial role in the pathway because the rate of histidine biosynthesis seems to be controlled primarily by regulation of HisG enzymatic activity. The sequence is that of ATP phosphoribosyltransferase from Pelotomaculum thermopropionicum (strain DSM 13744 / JCM 10971 / SI).